Consider the following 562-residue polypeptide: Transcriptional adapter 2A (562 aa).

The ZZ-type zinc finger occupies 91 to 146; sequence KDANRCATCRCSLTEPYIKCSECLDTLLCLQCFSRGKEAFSHRNNHAYIIVRDNIQ. Zn(2+) contacts are provided by Cys96, Cys99, Cys110, Cys113, Cys119, Cys122, His132, and His136. The SANT domain occupies 154-198; it reads WTARDERILLKTLRTHGYGNWEAVSQALDQRHEPAEVRRHYHDCY. An SWIRM domain is found at 471-562; that stretch reads CLTPTEYNFS…GHISRPPSYG (92 aa).

Component of the Ada2a-containing (ATAC) complex composed of at least Ada2a, Atac1, Hcf, Ada3, Gcn5, Mocs2B, Charac-14, Atac3, Atac2, NC2beta and wds. Component of a complex that does not include Gcn5 or Ada3.

Its subcellular location is the nucleus. The protein localises to the chromosome. Its function is as follows. Component of the histone acetyltransferase (HAT) complex ATAC; predominantly involved in acetylation of histone H4, including at Lys-6 (H4K5ac) and Lys-13 (H4K12ac). May be part of several different complexes, including Gcn5-independent complexes involved in RNA polymerase II-dependent transcription. The chain is Transcriptional adapter 2A from Drosophila melanogaster (Fruit fly).